The following is a 64-amino-acid chain: Large ribosomal subunit protein bL35 (64 aa).

A compositionally biased stretch (polar residues) spans 1 to 10; the sequence is MPKMKTNSAA. The tract at residues 1-64 is disordered; that stretch reads MPKMKTNSAA…AKKLHQLLQK (64 aa). The segment covering 54–64 has biased composition (basic residues); that stretch reads QAKKLHQLLQK.

It belongs to the bacterial ribosomal protein bL35 family.

This Bifidobacterium longum (strain NCC 2705) protein is Large ribosomal subunit protein bL35.